The following is a 295-amino-acid chain: uncharacterized protein (295 aa).

A Resolvase/invertase-type recombinase catalytic domain is found at 151-290; the sequence is RTAVCARLSS…RAVAAAARAG (140 aa). S159 serves as the catalytic O-(5'-phospho-DNA)-serine intermediate.

This is an uncharacterized protein from Mycobacterium bovis (strain ATCC BAA-935 / AF2122/97).